The primary structure comprises 349 residues: Ribosomal RNA large subunit methyltransferase Cfr (349 aa).

The active-site Proton acceptor is Glu-89. Residues 96 to 331 (KAGWESFCIS…VTVRSQFGID (236 aa)) enclose the Radical SAM core domain. Cys-103 and Cys-336 are disulfide-bonded. Residues Cys-110, Cys-114, and Cys-117 each coordinate [4Fe-4S] cluster. S-adenosyl-L-methionine-binding positions include 156-157 (GE), Ser-187, 210-212 (SLH), and Asn-291. Cys-336 functions as the S-methylcysteine intermediate in the catalytic mechanism.

It belongs to the radical SAM superfamily. RlmN family. Cfr subfamily. [4Fe-4S] cluster is required as a cofactor.

It localises to the cytoplasm. It carries out the reaction adenosine(2503) in 23S rRNA + 2 reduced [2Fe-2S]-[ferredoxin] + 2 S-adenosyl-L-methionine = 8-methyladenosine(2503) in 23S rRNA + 5'-deoxyadenosine + L-methionine + 2 oxidized [2Fe-2S]-[ferredoxin] + S-adenosyl-L-homocysteine. In terms of biological role, specifically methylates position 8 of adenine 2503 in 23S rRNA. Confers resistance to some classes of antibiotics. The protein is Ribosomal RNA large subunit methyltransferase Cfr of Bacillus velezensis (strain DSM 23117 / BGSC 10A6 / LMG 26770 / FZB42) (Bacillus amyloliquefaciens subsp. plantarum).